We begin with the raw amino-acid sequence, 64 residues long: Alpha-conotoxin-like Lp1.8 (64 aa).

An N-terminal signal peptide occupies residues 1–21; sequence MGMRMMFTMFLLVVLTTTVVS. Residues 22–41 constitute a propeptide that is removed on maturation; that stretch reads FNSDRESNHENRRTSNQITR. Disulfide bonds link C47–C53 and C48–C61. Residues 49-51 form a lacks the Ser-Xaa-Pro motif that is crucial for potent interaction with nAChR region; the sequence is KDP.

It belongs to the conotoxin A superfamily. As to expression, expressed by the venom duct.

The protein resides in the secreted. Functionally, alpha-conotoxins act on postsynaptic membranes, they bind to the nicotinic acetylcholine receptors (nAChR) and thus inhibit them. Has possibly a distinct nAChR binding mode from other alpha-conotoxins, due to a different three residue motif (Lys-Xaa-Pro instead of the conserved Ser-Xaa-Pro motif). The polypeptide is Alpha-conotoxin-like Lp1.8 (Conus leopardus (Leopard cone)).